The primary structure comprises 300 residues: tRNA pseudouridine synthase B (300 aa).

The active-site Nucleophile is D38.

It belongs to the pseudouridine synthase TruB family. Type 1 subfamily.

It catalyses the reaction uridine(55) in tRNA = pseudouridine(55) in tRNA. Its function is as follows. Responsible for synthesis of pseudouridine from uracil-55 in the psi GC loop of transfer RNAs. This is tRNA pseudouridine synthase B from Dehalococcoides mccartyi (strain CBDB1).